The following is a 157-amino-acid chain: 6,7-dimethyl-8-ribityllumazine synthase (157 aa).

5-amino-6-(D-ribitylamino)uracil is bound by residues Trp27, 59–61, and 81–83; these read AIE and VVI. Residue 86 to 87 participates in (2S)-2-hydroxy-3-oxobutyl phosphate binding; it reads ET. His89 functions as the Proton donor in the catalytic mechanism. Asn114 contributes to the 5-amino-6-(D-ribitylamino)uracil binding site. Residue Arg128 coordinates (2S)-2-hydroxy-3-oxobutyl phosphate.

The protein belongs to the DMRL synthase family. In terms of assembly, homopentamer.

The catalysed reaction is (2S)-2-hydroxy-3-oxobutyl phosphate + 5-amino-6-(D-ribitylamino)uracil = 6,7-dimethyl-8-(1-D-ribityl)lumazine + phosphate + 2 H2O + H(+). It functions in the pathway cofactor biosynthesis; riboflavin biosynthesis; riboflavin from 2-hydroxy-3-oxobutyl phosphate and 5-amino-6-(D-ribitylamino)uracil: step 1/2. Its function is as follows. Catalyzes the formation of 6,7-dimethyl-8-ribityllumazine by condensation of 5-amino-6-(D-ribitylamino)uracil with 3,4-dihydroxy-2-butanone 4-phosphate. This is the penultimate step in the biosynthesis of riboflavin. This Mycolicibacterium vanbaalenii (strain DSM 7251 / JCM 13017 / BCRC 16820 / KCTC 9966 / NRRL B-24157 / PYR-1) (Mycobacterium vanbaalenii) protein is 6,7-dimethyl-8-ribityllumazine synthase.